A 476-amino-acid chain; its full sequence is Protein transport protein Sec61 subunit alpha-like 2 (476 aa).

The Cytoplasmic portion of the chain corresponds to 2–33 (AIKFLEVIKPFCAVLPEIQKPERRIQFKEKVL). The helical transmembrane segment at 34-53 (WTAITLFIFLVCCQIPLFGI) threads the bilayer. Residues 54 to 76 (MSSDSADPFYWMRVIMASNRGTL) are Lumenal-facing. A helical membrane pass occupies residues 77–96 (MELGISPIVTSGLIMQLLAG). Over 97 to 117 (AKIIEVGDTPKDRALFNGAQK) the chain is Cytoplasmic. The helical transmembrane segment at 118–138 (LFGMIITIGQAVVYVMTGMYG) threads the bilayer. The Lumenal portion of the chain corresponds to 139–144 (DPSEMG). Residues 145 to 165 (AGICLLIIIQLFVAGLIVLLL) traverse the membrane as a helical segment. The Cytoplasmic portion of the chain corresponds to 166–172 (DELLQKG). The helical transmembrane segment at 173-193 (YGLGSGISLFIATNICETIVW) threads the bilayer. Residues 194–240 (KAFSPTTVNTGRGTEFEGAIIALFHLLATRTDKVRALREAFYRQNLP) lie on the Lumenal side of the membrane. A helical transmembrane segment spans residues 241 to 261 (NLMNLIATIFVFAVVIYFQGF). Over 262-288 (RVDLPIKSARYRGQYNTYPIKLFYTSN) the chain is Cytoplasmic. The helical transmembrane segment at 289–309 (IPIILQSALVSNLYVISQMLS) threads the bilayer. Residues 310 to 354 (TRFSGNFLVNLLGTWSDTSTGGPARAYPVGGLCYYLSPPESFGTV) lie on the Lumenal side of the membrane. Residues 355 to 375 (LEDPIHAIIYIIFMLGSCAFF) traverse the membrane as a helical segment. At 376–420 (SKTWIEVSGSSAKDVAKQLKEQQMVMRGHRETSMVHELNRYIPTA) the chain is on the cytoplasmic side. Residues 421–441 (AAFGGLCIGGLSVMADFLGAI) form a helical membrane-spanning segment. Residues 442–445 (GSGT) are Lumenal-facing. The chain crosses the membrane as a helical span at residues 446–462 (GILLAVTIIYQYFEIFV). Over 463–476 (KEQSEVGSVGALLF) the chain is Cytoplasmic.

Belongs to the SecY/SEC61-alpha family. The SEC61 channel-forming translocon complex consists of channel-forming core components SEC61A1, SEC61B and SEC61G and different auxiliary components such as SEC62 and SEC63.

It is found in the endoplasmic reticulum membrane. Functionally, component of SEC61 channel-forming translocon complex that mediates transport of signal peptide-containing precursor polypeptides across the endoplasmic reticulum (ER). Forms a ribosome receptor and a gated pore in the ER membrane, both functions required for cotranslational translocation of nascent polypeptides. The polypeptide is Protein transport protein Sec61 subunit alpha-like 2 (sec61al2) (Danio rerio (Zebrafish)).